Here is a 366-residue protein sequence, read N- to C-terminus: Holliday junction branch migration complex subunit RuvB (366 aa).

Residues Met-1–Ile-49 form a disordered region. The interval Pro-13 to Tyr-210 is large ATPase domain (RuvB-L). ATP-binding positions include Ile-49, Arg-50, Gly-91, Lys-94, Thr-95, Thr-96, Glu-157–Tyr-159, Arg-200, Tyr-210, and Arg-247. Position 95 (Thr-95) interacts with Mg(2+). The tract at residues Glu-211–Gln-281 is small ATPAse domain (RuvB-S). The segment at Pro-284–Leu-366 is head domain (RuvB-H). DNA contacts are provided by Arg-339 and Arg-344.

It belongs to the RuvB family. In terms of assembly, homohexamer. Forms an RuvA(8)-RuvB(12)-Holliday junction (HJ) complex. HJ DNA is sandwiched between 2 RuvA tetramers; dsDNA enters through RuvA and exits via RuvB. An RuvB hexamer assembles on each DNA strand where it exits the tetramer. Each RuvB hexamer is contacted by two RuvA subunits (via domain III) on 2 adjacent RuvB subunits; this complex drives branch migration. In the full resolvosome a probable DNA-RuvA(4)-RuvB(12)-RuvC(2) complex forms which resolves the HJ.

It localises to the cytoplasm. The enzyme catalyses ATP + H2O = ADP + phosphate + H(+). Functionally, the RuvA-RuvB-RuvC complex processes Holliday junction (HJ) DNA during genetic recombination and DNA repair, while the RuvA-RuvB complex plays an important role in the rescue of blocked DNA replication forks via replication fork reversal (RFR). RuvA specifically binds to HJ cruciform DNA, conferring on it an open structure. The RuvB hexamer acts as an ATP-dependent pump, pulling dsDNA into and through the RuvAB complex. RuvB forms 2 homohexamers on either side of HJ DNA bound by 1 or 2 RuvA tetramers; 4 subunits per hexamer contact DNA at a time. Coordinated motions by a converter formed by DNA-disengaged RuvB subunits stimulates ATP hydrolysis and nucleotide exchange. Immobilization of the converter enables RuvB to convert the ATP-contained energy into a lever motion, pulling 2 nucleotides of DNA out of the RuvA tetramer per ATP hydrolyzed, thus driving DNA branch migration. The RuvB motors rotate together with the DNA substrate, which together with the progressing nucleotide cycle form the mechanistic basis for DNA recombination by continuous HJ branch migration. Branch migration allows RuvC to scan DNA until it finds its consensus sequence, where it cleaves and resolves cruciform DNA. The sequence is that of Holliday junction branch migration complex subunit RuvB from Trichormus variabilis (strain ATCC 29413 / PCC 7937) (Anabaena variabilis).